Here is a 324-residue protein sequence, read N- to C-terminus: MKPSIILYKTLPDDLLHRLEAHFTVTQVPNLHPETVARHAQAFASAQGLLGTSETVNRALLEKMPALRAASTISVGYDNVEVDALTARKIVLMHTPAVLTETVADTVMALMLATARRVVDVAERVKAGEWTESIGPAWFGVDVHHKTLGIVGMGRIGMALAQRAHFGFTMPVLYHARRRHQEAEDRFNARYCDLDTLLQEADFVCVILPLTAETRHLFGATQFARMKSSAIFINAGRGPVVDENALIAALQNGEIYAAGLDVFEQEPLSVDSPLLNMSNVVAVPHIGSATHETRYNMMACAVDNLIDALQGKIEKNCVNPQAAG.

Catalysis depends on residues R237 and E266. H285 functions as the Proton donor in the catalytic mechanism.

The protein belongs to the D-isomer specific 2-hydroxyacid dehydrogenase family. GhrB subfamily. Homodimer.

It localises to the cytoplasm. It catalyses the reaction glycolate + NADP(+) = glyoxylate + NADPH + H(+). The catalysed reaction is (R)-glycerate + NAD(+) = 3-hydroxypyruvate + NADH + H(+). The enzyme catalyses (R)-glycerate + NADP(+) = 3-hydroxypyruvate + NADPH + H(+). Its function is as follows. Catalyzes the NADPH-dependent reduction of glyoxylate and hydroxypyruvate into glycolate and glycerate, respectively. The protein is Glyoxylate/hydroxypyruvate reductase B of Salmonella typhi.